The chain runs to 264 residues: Glutamate racemase (264 aa).

Residues 10–11 (DS) and 42–43 (YG) each bind substrate. Catalysis depends on Cys-73, which acts as the Proton donor/acceptor. Substrate is bound at residue 74-75 (NT). The active-site Proton donor/acceptor is the Cys-183. A substrate-binding site is contributed by 184 to 185 (TH).

Belongs to the aspartate/glutamate racemases family.

It carries out the reaction L-glutamate = D-glutamate. It functions in the pathway cell wall biogenesis; peptidoglycan biosynthesis. Its function is as follows. Provides the (R)-glutamate required for cell wall biosynthesis. The sequence is that of Glutamate racemase from Streptococcus pyogenes serotype M3 (strain ATCC BAA-595 / MGAS315).